The chain runs to 268 residues: Non-homologous end joining protein Ku (268 aa).

Residues valine 13–asparagine 175 form the Ku domain. The tract at residues arginine 174–serine 194 is disordered.

Belongs to the prokaryotic Ku family. In terms of assembly, homodimer. Interacts with LigD.

Its function is as follows. With LigD forms a non-homologous end joining (NHEJ) DNA repair enzyme, which repairs dsDNA breaks with reduced fidelity. Binds linear dsDNA with 5'- and 3'- overhangs but not closed circular dsDNA nor ssDNA. Recruits and stimulates the ligase activity of LigD. The chain is Non-homologous end joining protein Ku from Gluconacetobacter diazotrophicus (strain ATCC 49037 / DSM 5601 / CCUG 37298 / CIP 103539 / LMG 7603 / PAl5).